The sequence spans 446 residues: Transcriptional regulator STERILE APETALA (446 aa).

The span at 1–10 (MSTSSSSSDN) shows a compositional bias: low complexity. Residues 1–32 (MSTSSSSSDNGAGGSGGVFEAPSPSRPRRGAN) form a disordered region.

In terms of tissue distribution, expressed in inflorescence and floral meristems, young floral organ primordia, and later in ovule primordia.

Its subcellular location is the nucleus. Its function is as follows. Transcriptional regulator involved in the specification of floral identity. Acts as A class cadastral protein by repressing the C class floral homeotic gene AGAMOUS in the external flower organs in association with APETALA2 and other repressors. Is required to maintain floral meristem identity in concert with AGAMOUS. Also interacts with APETALA2 to ensure the normal development of ovule. This Arabidopsis thaliana (Mouse-ear cress) protein is Transcriptional regulator STERILE APETALA (SAP).